The following is a 23-amino-acid chain: Potassium channel toxin kappa-KTx 1.3 (23 aa).

Intrachain disulfides connect C4–C22 and C8–C18.

Belongs to the short scorpion toxin superfamily. Potassium channel inhibitor kappa-KTx family. Kappa-KTx 1 subfamily. As to quaternary structure, monomer. In terms of processing, is not amidated. Expressed by the venom gland.

It is found in the secreted. Shows very weak blocking activity on voltage-gated potassium channels Kv10.1/KCNH1/EAG1 (6.2% inhibition by 40 uM of the toxin). Has no effect on the other voltage-gated potassium channels tested. This Heterometrus spinifer (Asia giant forest scorpion) protein is Potassium channel toxin kappa-KTx 1.3.